A 237-amino-acid polypeptide reads, in one-letter code: Sugar fermentation stimulation protein homolog (237 aa).

Belongs to the SfsA family.

This Azorhizobium caulinodans (strain ATCC 43989 / DSM 5975 / JCM 20966 / LMG 6465 / NBRC 14845 / NCIMB 13405 / ORS 571) protein is Sugar fermentation stimulation protein homolog.